A 462-amino-acid chain; its full sequence is Gamma-glutamylethanolamide synthetase GlnA4 (462 aa).

A GS beta-grasp domain is found at 30 to 126; it reads GDIDTVVLAF…AVADLAWEDG (97 aa). The GS catalytic domain occupies 133–462; it reads PRQILRRQLE…WELRRSFERM (330 aa). Residues Glu156 and Glu158 each coordinate Mg(2+). Glu214 serves as a coordination point for ATP. Mg(2+) contacts are provided by Glu219 and Glu226. Gly270 contributes to the L-glutamate binding site. His274 is a binding site for Mg(2+). Residue 276–278 participates in ATP binding; the sequence is HLS. L-glutamate contacts are provided by Arg325 and Arg343. ATP is bound by residues Arg343 and Arg348. Glu359 provides a ligand contact to Mg(2+). Residue Arg361 participates in L-glutamate binding.

The protein belongs to the glutamine synthetase family. Mg(2+) serves as cofactor.

The enzyme catalyses ethanolamine + L-glutamate + ATP = gamma-L-glutamylethanolamide + ADP + phosphate + H(+). It functions in the pathway amine and polyamine degradation; ethanolamine degradation. Its activity is regulated as follows. Very slightly decreased activity with glutamine synthetase (GS) inhibitor methionine sulfoximine (MSO). In terms of biological role, involved in the catabolism of monoamine ethanolamine. Catalyzes the ATP-dependent gamma-glutamylation of ethanolamine. No activity with polyamines. No complementation of the L-glutamine auxotrophy of an E.coli glnA mutant. Enables survival of S.coelicolor under high local environmental ethanolamine conditions. May play a role during starvation conditions to limit intracellular ethanolamine concentration, which in excess is toxic to the cells. The protein is Gamma-glutamylethanolamide synthetase GlnA4 of Streptomyces coelicolor (strain ATCC BAA-471 / A3(2) / M145).